Here is a 276-residue protein sequence, read N- to C-terminus: Lectin-like protein At3g16530 (276 aa).

A signal peptide spans 1 to 19; it reads MQIHKLCFLVLFLANAAFA. Residues 20–270 form a legume-lectin like region; that stretch reads VKFNFDSFDG…RHDIWSWSFE (251 aa). Residues asparagine 79, asparagine 129, and asparagine 196 are each glycosylated (N-linked (GlcNAc...) asparagine).

This sequence belongs to the leguminous lectin family.

The protein resides in the secreted. Its subcellular location is the extracellular space. It localises to the apoplast. In Arabidopsis thaliana (Mouse-ear cress), this protein is Lectin-like protein At3g16530.